Consider the following 312-residue polypeptide: Aspartate carbamoyltransferase catalytic subunit (312 aa).

The carbamoyl phosphate site is built by Arg58 and Thr59. Lys86 serves as a coordination point for L-aspartate. Carbamoyl phosphate-binding residues include Arg108, His136, and Gln139. L-aspartate-binding residues include Arg169 and Arg223. Positions 264 and 265 each coordinate carbamoyl phosphate.

The protein belongs to the aspartate/ornithine carbamoyltransferase superfamily. ATCase family. In terms of assembly, heterododecamer (2C3:3R2) of six catalytic PyrB chains organized as two trimers (C3), and six regulatory PyrI chains organized as three dimers (R2).

It carries out the reaction carbamoyl phosphate + L-aspartate = N-carbamoyl-L-aspartate + phosphate + H(+). The protein operates within pyrimidine metabolism; UMP biosynthesis via de novo pathway; (S)-dihydroorotate from bicarbonate: step 2/3. In terms of biological role, catalyzes the condensation of carbamoyl phosphate and aspartate to form carbamoyl aspartate and inorganic phosphate, the committed step in the de novo pyrimidine nucleotide biosynthesis pathway. This chain is Aspartate carbamoyltransferase catalytic subunit, found in Desulforapulum autotrophicum (strain ATCC 43914 / DSM 3382 / VKM B-1955 / HRM2) (Desulfobacterium autotrophicum).